Consider the following 29-residue polypeptide: MDIVSLAWAGLMVVFTFSLSLVVWGRSGL.

Residues 3 to 23 (IVSLAWAGLMVVFTFSLSLVV) traverse the membrane as a helical segment.

It belongs to the PetN family. The 4 large subunits of the cytochrome b6-f complex are cytochrome b6, subunit IV (17 kDa polypeptide, PetD), cytochrome f and the Rieske protein, while the 4 small subunits are PetG, PetL, PetM and PetN. The complex functions as a dimer.

The protein resides in the plastid. Its subcellular location is the chloroplast thylakoid membrane. Component of the cytochrome b6-f complex, which mediates electron transfer between photosystem II (PSII) and photosystem I (PSI), cyclic electron flow around PSI, and state transitions. This is Cytochrome b6-f complex subunit 8 from Arabis hirsuta (Hairy rock-cress).